A 54-amino-acid polypeptide reads, in one-letter code: Large ribosomal subunit protein bL32c (54 aa).

The interval methionine 1–tryptophan 20 is disordered.

Belongs to the bacterial ribosomal protein bL32 family.

The protein resides in the plastid. Its subcellular location is the chloroplast. The protein is Large ribosomal subunit protein bL32c (rpl32) of Euglena gracilis.